Consider the following 160-residue polypeptide: Suppressyn (160 aa).

The first 39 residues, 1–39 (MACIYPTTFYTSLPTKSLNMGISLTTILILSVAVLLSTA), serve as a signal peptide directing secretion. The segment at 137–160 (AKASKPTTPPENRPRHFHSFIQKL) is disordered.

In terms of assembly, interacts (secreted) with SLC1A5; mainly at cell surface. As to expression, specifically expressed in placenta by extravillous trophoblasts and syncytiotrophoblasts (at protein level).

Its subcellular location is the secreted. Functionally, may play a role in trophoblasts syncytialization, the spontaneous fusion of their plasma membranes, an essential process in placental development. May negatively regulate cell-cell fusion by interacting with SLC1A5, the probable receptor on the cell surface of the fusogenic syncytin-1/ERVW-1. The sequence is that of Suppressyn (ERVH48-1) from Homo sapiens (Human).